The primary structure comprises 489 residues: 3-octaprenyl-4-hydroxybenzoate carboxy-lyase (489 aa).

Asn-172 provides a ligand contact to Mn(2+). Prenylated FMN contacts are provided by residues 175–177 (IYR), 189–191 (RWL), and 194–195 (RG). Glu-238 is a binding site for Mn(2+). Asp-287 serves as the catalytic Proton donor.

This sequence belongs to the UbiD family. Homohexamer. Prenylated FMN serves as cofactor. Mn(2+) is required as a cofactor.

The protein localises to the cell membrane. It catalyses the reaction a 4-hydroxy-3-(all-trans-polyprenyl)benzoate + H(+) = a 2-(all-trans-polyprenyl)phenol + CO2. Its pathway is cofactor biosynthesis; ubiquinone biosynthesis. In terms of biological role, catalyzes the decarboxylation of 3-octaprenyl-4-hydroxy benzoate to 2-octaprenylphenol, an intermediate step in ubiquinone biosynthesis. This Psychromonas ingrahamii (strain DSM 17664 / CCUG 51855 / 37) protein is 3-octaprenyl-4-hydroxybenzoate carboxy-lyase.